Reading from the N-terminus, the 156-residue chain is SCP2 sterol-binding domain-containing protein 1 (156 aa).

The 113-residue stretch at Thr44–Trp156 folds into the SCP2 domain.

This Bos taurus (Bovine) protein is SCP2 sterol-binding domain-containing protein 1 (SCP2D1).